The primary structure comprises 145 residues: 3-hydroxyacyl-[acyl-carrier-protein] dehydratase FabZ (145 aa).

The active site involves histidine 49.

It belongs to the thioester dehydratase family. FabZ subfamily.

The protein resides in the cytoplasm. The catalysed reaction is a (3R)-hydroxyacyl-[ACP] = a (2E)-enoyl-[ACP] + H2O. Functionally, involved in unsaturated fatty acids biosynthesis. Catalyzes the dehydration of short chain beta-hydroxyacyl-ACPs and long chain saturated and unsaturated beta-hydroxyacyl-ACPs. The chain is 3-hydroxyacyl-[acyl-carrier-protein] dehydratase FabZ from Rickettsia felis (strain ATCC VR-1525 / URRWXCal2) (Rickettsia azadi).